We begin with the raw amino-acid sequence, 381 residues long: Succinyl-diaminopimelate desuccinylase (381 aa).

His72 contacts Zn(2+). The active site involves Asp74. Residue Asp105 participates in Zn(2+) binding. Glu139 acts as the Proton acceptor in catalysis. Residues Glu140, Glu168, and His354 each contribute to the Zn(2+) site.

This sequence belongs to the peptidase M20A family. DapE subfamily. In terms of assembly, homodimer. It depends on Zn(2+) as a cofactor. Co(2+) serves as cofactor.

The enzyme catalyses N-succinyl-(2S,6S)-2,6-diaminopimelate + H2O = (2S,6S)-2,6-diaminopimelate + succinate. It functions in the pathway amino-acid biosynthesis; L-lysine biosynthesis via DAP pathway; LL-2,6-diaminopimelate from (S)-tetrahydrodipicolinate (succinylase route): step 3/3. Catalyzes the hydrolysis of N-succinyl-L,L-diaminopimelic acid (SDAP), forming succinate and LL-2,6-diaminopimelate (DAP), an intermediate involved in the bacterial biosynthesis of lysine and meso-diaminopimelic acid, an essential component of bacterial cell walls. This Shewanella sp. (strain MR-4) protein is Succinyl-diaminopimelate desuccinylase.